Consider the following 535-residue polypeptide: High affinity immunoglobulin alpha and immunoglobulin mu Fc receptor (535 aa).

The first 35 residues, methionine 1–serine 35, serve as a signal peptide directing secretion. Over methionine 36–arginine 455 the chain is Extracellular. The interval glycine 95–tryptophan 117 is mediates immunoglobulin Fc fragment-binding. An Ig-like V-type domain is found at glycine 95 to threonine 189. Cysteine 102 and cysteine 173 are oxidised to a cystine. N-linked (GlcNAc...) asparagine glycosylation occurs at asparagine 187. 2 disordered regions span residues alanine 201 to glutamate 360 and glutamate 405 to valine 430. Low complexity-rich tracts occupy residues proline 208 to glycine 220 and threonine 241 to serine 253. Residues lysine 291 to glutamate 328 show a composition bias toward polar residues. The span at aspartate 330 to arginine 346 shows a compositional bias: basic and acidic residues. Positions leucine 413–serine 429 are enriched in polar residues. A helical membrane pass occupies residues isoleucine 456 to lysine 476. Residues arginine 477–proline 535 lie on the Cytoplasmic side of the membrane. The tract at residues leucine 507 to proline 535 is disordered. A compositionally biased stretch (polar residues) spans asparagine 513–valine 528.

In terms of assembly, interacts with IGHM; this interaction facilitates the endocytosis of IgM-coated microbes and IgM-antigen immune complexes. N-glycosylated. In terms of tissue distribution, expressed in several tissues including thymus, spleen, liver, kidney, small and large intestine, testis and placenta. Expressed by oligodendrocytes, B-cells and macrophages but not granulocytes, T-cells or NK cells (at protein level).

The protein localises to the cell membrane. In terms of biological role, functions as a receptor for the Fc fragment of IgA and IgM. Binds IgA and IgM with high affinity and mediates their endocytosis. May function in the immune response to microbes mediated by IgA and IgM. The chain is High affinity immunoglobulin alpha and immunoglobulin mu Fc receptor (Fcamr) from Mus musculus (Mouse).